A 142-amino-acid polypeptide reads, in one-letter code: Coactosin-like protein (142 aa).

An N-acetylalanine modification is found at Ala2. In terms of domain architecture, ADF-H spans 2-130; the sequence is ATKIDKEACR…EEDFIKSELK (129 aa). The interval 66–75 is flexible and important for F-actin binding; the sequence is TGDAMSKRSK. N6-acetyllysine occurs at positions 102 and 126.

It belongs to the actin-binding proteins ADF family. Coactosin subfamily. As to quaternary structure, interacts with 5-lipoxygenase (ALOX5/5LO) in a calcium-independent manner. Binds to F-actin with a stoichiometry of 1:2. Widely expressed with highest levels in placenta, lung, kidney and peripheral blood leukocytes and lower levels in brain, liver and pancreas.

The protein localises to the cytoplasm. It localises to the cytoskeleton. The protein resides in the nucleus. Its function is as follows. Binds to F-actin in a calcium-independent manner. Has no direct effect on actin depolymerization. Acts as a chaperone for ALOX5 (5LO), influencing both its stability and activity in leukotrienes synthesis. This chain is Coactosin-like protein (COTL1), found in Homo sapiens (Human).